The sequence spans 156 residues: Small ribosomal subunit protein uS7 (156 aa).

This sequence belongs to the universal ribosomal protein uS7 family. As to quaternary structure, part of the 30S ribosomal subunit. Contacts proteins S9 and S11.

One of the primary rRNA binding proteins, it binds directly to 16S rRNA where it nucleates assembly of the head domain of the 30S subunit. Is located at the subunit interface close to the decoding center, probably blocks exit of the E-site tRNA. The protein is Small ribosomal subunit protein uS7 of Geobacillus thermodenitrificans (strain NG80-2).